Reading from the N-terminus, the 293-residue chain is Phosphatidylserine decarboxylase proenzyme (293 aa).

Residues D88, H144, and S247 each act as charge relay system; for autoendoproteolytic cleavage activity in the active site. Catalysis depends on S247, which acts as the Schiff-base intermediate with substrate; via pyruvic acid; for decarboxylase activity. Pyruvic acid (Ser); by autocatalysis is present on S247.

The protein belongs to the phosphatidylserine decarboxylase family. PSD-B subfamily. Prokaryotic type I sub-subfamily. In terms of assembly, heterodimer of a large membrane-associated beta subunit and a small pyruvoyl-containing alpha subunit. Pyruvate is required as a cofactor. Post-translationally, is synthesized initially as an inactive proenzyme. Formation of the active enzyme involves a self-maturation process in which the active site pyruvoyl group is generated from an internal serine residue via an autocatalytic post-translational modification. Two non-identical subunits are generated from the proenzyme in this reaction, and the pyruvate is formed at the N-terminus of the alpha chain, which is derived from the carboxyl end of the proenzyme. The autoendoproteolytic cleavage occurs by a canonical serine protease mechanism, in which the side chain hydroxyl group of the serine supplies its oxygen atom to form the C-terminus of the beta chain, while the remainder of the serine residue undergoes an oxidative deamination to produce ammonia and the pyruvoyl prosthetic group on the alpha chain. During this reaction, the Ser that is part of the protease active site of the proenzyme becomes the pyruvoyl prosthetic group, which constitutes an essential element of the active site of the mature decarboxylase.

It is found in the cell membrane. It carries out the reaction a 1,2-diacyl-sn-glycero-3-phospho-L-serine + H(+) = a 1,2-diacyl-sn-glycero-3-phosphoethanolamine + CO2. It participates in phospholipid metabolism; phosphatidylethanolamine biosynthesis; phosphatidylethanolamine from CDP-diacylglycerol: step 2/2. Functionally, catalyzes the formation of phosphatidylethanolamine (PtdEtn) from phosphatidylserine (PtdSer). This Xylella fastidiosa (strain M23) protein is Phosphatidylserine decarboxylase proenzyme.